A 465-amino-acid chain; its full sequence is Calcitonin gene-related peptide type 1 receptor (465 aa).

An N-terminal signal peptide occupies residues 1–17 (MVICLLLCTPTDIFVVA). Residues 18-141 (SPEVNETQEY…HTNEGRMTAM (124 aa)) lie on the Extracellular side of the membrane. N-linked (GlcNAc...) asparagine glycans are attached at residues Asn22, Asn68, Asn120, and Asn125. 3 cysteine pairs are disulfide-bonded: Cys50–Cys76, Cys67–Cys107, and Cys90–Cys129. A helical membrane pass occupies residues 142–166 (NLFYLALIGHGLSLTSLLISLGIFF). At 167–177 (YFKSLSCQRIT) the chain is on the cytoplasmic side. Residues 178–200 (LHKNLFFSFVLNSVITIIWLTAV) form a helical membrane-spanning segment. Residues 201 to 211 (ANNQELVQRNP) lie on the Extracellular side of the membrane. The helical transmembrane segment at 212 to 240 (TSCKVSQFIHLYLFGCNYFWMLCEGIYLH) threads the bilayer. Residues 241 to 254 (TLIVVAVFAEKQHL) lie on the Cytoplasmic side of the membrane. A helical transmembrane segment spans residues 255-275 (MWYYLLGWGFPLIPASIHAIA). At 276–291 (RSYYYNDNCWISSNTS) the chain is on the extracellular side. The N-linked (GlcNAc...) asparagine glycan is linked to Asn289. Residues 292 to 316 (LLYIIHGPICAALLVNLFFLLNIVR) form a helical membrane-spanning segment. Residues 317–331 (VLITKLKVTHQAESS) lie on the Cytoplasmic side of the membrane. A helical membrane pass occupies residues 332 to 353 (LYMKAVRATLILVPLLGIQYVL). Residues 354-368 (LPYKPEGRVSSEIYD) are Extracellular-facing. The helical transmembrane segment at 369–389 (YIMHILMHYQGLLVATIFCFF) threads the bilayer. At 390–465 (NGEVQGVLRR…SILKSENPFT (76 aa)) the chain is on the cytoplasmic side.

This sequence belongs to the G-protein coupled receptor 2 family.

The protein resides in the cell membrane. In terms of biological role, may function as G protein-coupled receptor for calcitonin-gene-related peptides and adrenomedullin. Specificity may be modulated by accessory proteins. May activate cAMP-dependent pathway. This is Calcitonin gene-related peptide type 1 receptor (calcrl) from Oncorhynchus gorbuscha (Pink salmon).